Consider the following 310-residue polypeptide: Putative S-adenosyl-L-methionine-dependent methyltransferase ML2640 (310 aa).

S-adenosyl-L-methionine contacts are provided by residues Asp132 and 161 to 162 (DL).

The protein belongs to the UPF0677 family.

Exhibits S-adenosyl-L-methionine-dependent methyltransferase activity. In Mycobacterium leprae (strain TN), this protein is Putative S-adenosyl-L-methionine-dependent methyltransferase ML2640.